Reading from the N-terminus, the 102-residue chain is Large ribosomal subunit protein bL21 (102 aa).

Belongs to the bacterial ribosomal protein bL21 family. In terms of assembly, part of the 50S ribosomal subunit. Contacts protein L20.

Its function is as follows. This protein binds to 23S rRNA in the presence of protein L20. In Bifidobacterium longum (strain DJO10A), this protein is Large ribosomal subunit protein bL21.